The chain runs to 426 residues: S-adenosylmethionine synthase (426 aa).

ATP is bound at residue His22. Asp24 serves as a coordination point for Mg(2+). Position 50 (Glu50) interacts with K(+). Glu63 and Gln106 together coordinate L-methionine. The segment at 106–116 (QSPDISQGVTA) is flexible loop. ATP is bound by residues 181-183 (DGK), 257-258 (KF), Asp266, 272-273 (RK), Ala289, and Lys293. An L-methionine-binding site is contributed by Asp266. Position 297 (Lys297) interacts with L-methionine.

This sequence belongs to the AdoMet synthase family. As to quaternary structure, homotetramer; dimer of dimers. Mg(2+) is required as a cofactor. Requires K(+) as cofactor.

It is found in the cytoplasm. It catalyses the reaction L-methionine + ATP + H2O = S-adenosyl-L-methionine + phosphate + diphosphate. It participates in amino-acid biosynthesis; S-adenosyl-L-methionine biosynthesis; S-adenosyl-L-methionine from L-methionine: step 1/1. Its function is as follows. Catalyzes the formation of S-adenosylmethionine (AdoMet) from methionine and ATP. The overall synthetic reaction is composed of two sequential steps, AdoMet formation and the subsequent tripolyphosphate hydrolysis which occurs prior to release of AdoMet from the enzyme. In Synechocystis sp. (strain ATCC 27184 / PCC 6803 / Kazusa), this protein is S-adenosylmethionine synthase.